Here is a 445-residue protein sequence, read N- to C-terminus: 3-phosphoshikimate 1-carboxyvinyltransferase (445 aa).

Residues Lys21, Ser22, and Arg26 each contribute to the 3-phosphoshikimate site. A phosphoenolpyruvate-binding site is contributed by Lys21. Phosphoenolpyruvate is bound by residues Gly92 and Arg120. 4 residues coordinate 3-phosphoshikimate: Ser165, Gln166, Asp307, and Lys334. Gln166 lines the phosphoenolpyruvate pocket. Asp307 functions as the Proton acceptor in the catalytic mechanism. 3 residues coordinate phosphoenolpyruvate: Arg338, Arg379, and Lys405.

It belongs to the EPSP synthase family. In terms of assembly, monomer.

It localises to the cytoplasm. It carries out the reaction 3-phosphoshikimate + phosphoenolpyruvate = 5-O-(1-carboxyvinyl)-3-phosphoshikimate + phosphate. It functions in the pathway metabolic intermediate biosynthesis; chorismate biosynthesis; chorismate from D-erythrose 4-phosphate and phosphoenolpyruvate: step 6/7. Its function is as follows. Catalyzes the transfer of the enolpyruvyl moiety of phosphoenolpyruvate (PEP) to the 5-hydroxyl of shikimate-3-phosphate (S3P) to produce enolpyruvyl shikimate-3-phosphate and inorganic phosphate. This is 3-phosphoshikimate 1-carboxyvinyltransferase from Chlamydia abortus (strain DSM 27085 / S26/3) (Chlamydophila abortus).